We begin with the raw amino-acid sequence, 395 residues long: MNAIAVSPVQHVGVIGGGQLAWMLAPAAQQLGMSLHVQTPNDHDPAVAIADQTVLAAVADAAATAKLAQACDVITFENEFVDLPALTELEETGVRFRPRPAAIASLLDKLDQRQLLTRLGLPTPRFLAIAAATATESELTALGFPVVLKQRRHGYDGKGTQVLRSLAELQQALQSYGDTPLLLEEFIPFEQELAVMVARSQSGAIATFPVVQTHQQNQVCRWVVAPAAIPGALQKAVAAIARTLVETVDYVGVAGIELFQQGDRLWVNEIAPRTHNSGHYSLDACQTSQFEQQLRAIADLPLGSTALQWPGALMVNLLGFEDHQSGYAELRQQLAALPGACLYWYGKTESKPGRKLGHITLPLSGASSTERAQQAQTMLAQVEAIWPNPDTAHQP.

ATP-binding positions include Lys109, Lys149, 184 to 187 (EEFI), Glu192, and 268 to 269 (NE). The ATP-grasp domain occupies 113-298 (RQLLTRLGLP…QFEQQLRAIA (186 aa)).

The protein belongs to the PurK/PurT family. In terms of assembly, homodimer.

The catalysed reaction is 5-amino-1-(5-phospho-beta-D-ribosyl)imidazole + hydrogencarbonate + ATP = 5-carboxyamino-1-(5-phospho-D-ribosyl)imidazole + ADP + phosphate + 2 H(+). It participates in purine metabolism; IMP biosynthesis via de novo pathway; 5-amino-1-(5-phospho-D-ribosyl)imidazole-4-carboxylate from 5-amino-1-(5-phospho-D-ribosyl)imidazole (N5-CAIR route): step 1/2. Its function is as follows. Catalyzes the ATP-dependent conversion of 5-aminoimidazole ribonucleotide (AIR) and HCO(3)(-) to N5-carboxyaminoimidazole ribonucleotide (N5-CAIR). This is N5-carboxyaminoimidazole ribonucleotide synthase from Synechococcus elongatus (strain ATCC 33912 / PCC 7942 / FACHB-805) (Anacystis nidulans R2).